The following is a 474-amino-acid chain: tRNA-2-methylthio-N(6)-dimethylallyladenosine synthase (474 aa).

Residues 3-120 (KKLHIKTWGC…LPEMINQVKG (118 aa)) enclose the MTTase N-terminal domain. [4Fe-4S] cluster contacts are provided by Cys12, Cys49, Cys83, Cys157, Cys161, and Cys164. The 233-residue stretch at 143–375 (RAEGPTAFVS…QERINQQAMA (233 aa)) folds into the Radical SAM core domain. Residues 378–441 (RRMLGTTQRI…PNSLRGKVIR (64 aa)) form the TRAM domain.

Belongs to the methylthiotransferase family. MiaB subfamily. As to quaternary structure, monomer. It depends on [4Fe-4S] cluster as a cofactor.

It localises to the cytoplasm. It carries out the reaction N(6)-dimethylallyladenosine(37) in tRNA + (sulfur carrier)-SH + AH2 + 2 S-adenosyl-L-methionine = 2-methylsulfanyl-N(6)-dimethylallyladenosine(37) in tRNA + (sulfur carrier)-H + 5'-deoxyadenosine + L-methionine + A + S-adenosyl-L-homocysteine + 2 H(+). Functionally, catalyzes the methylthiolation of N6-(dimethylallyl)adenosine (i(6)A), leading to the formation of 2-methylthio-N6-(dimethylallyl)adenosine (ms(2)i(6)A) at position 37 in tRNAs that read codons beginning with uridine. This is tRNA-2-methylthio-N(6)-dimethylallyladenosine synthase from Cronobacter sakazakii (strain ATCC BAA-894) (Enterobacter sakazakii).